A 642-amino-acid chain; its full sequence is Threonine--tRNA ligase (642 aa).

A TGS domain is found at 1–58 (MQVAGKELEVQQGALCGEVLKEALSKKQFKNVVVAKCGDTLLDLTTTVPADCTDLEPV). The segment at 239–530 (DHRKLGTQLD…LLEHTGGALP (292 aa)) is catalytic. Zn(2+) is bound by residues C331, H382, and H507.

The protein belongs to the class-II aminoacyl-tRNA synthetase family. Homodimer. It depends on Zn(2+) as a cofactor.

The protein localises to the cytoplasm. The catalysed reaction is tRNA(Thr) + L-threonine + ATP = L-threonyl-tRNA(Thr) + AMP + diphosphate + H(+). Its function is as follows. Catalyzes the attachment of threonine to tRNA(Thr) in a two-step reaction: L-threonine is first activated by ATP to form Thr-AMP and then transferred to the acceptor end of tRNA(Thr). Also edits incorrectly charged L-seryl-tRNA(Thr). This is Threonine--tRNA ligase from Maridesulfovibrio salexigens (strain ATCC 14822 / DSM 2638 / NCIMB 8403 / VKM B-1763) (Desulfovibrio salexigens).